Consider the following 209-residue polypeptide: Outer-membrane lipoprotein carrier protein (209 aa).

The N-terminal stretch at 1 to 24 is a signal peptide; sequence MTRYVISRLSAIALLALAPALALA.

Belongs to the LolA family. As to quaternary structure, monomer.

The protein localises to the periplasm. Participates in the translocation of lipoproteins from the inner membrane to the outer membrane. Only forms a complex with a lipoprotein if the residue after the N-terminal Cys is not an aspartate (The Asp acts as a targeting signal to indicate that the lipoprotein should stay in the inner membrane). The chain is Outer-membrane lipoprotein carrier protein from Bordetella avium (strain 197N).